A 311-amino-acid polypeptide reads, in one-letter code: Putative prophage capsid protein YqbE (311 aa).

This sequence belongs to the encapsulin family. Family 3 subfamily.

Possibly a prophage capsid protein. This is Putative prophage capsid protein YqbE (yqbE) from Bacillus subtilis (strain 168).